The chain runs to 505 residues: Pleckstrin homology domain-containing family D member 1 (505 aa).

A PH domain is found at 28 to 136; sequence KVQLYGVLWK…WLEMLQESGK (109 aa). Residues 146-391 are a coiled coil; it reads EAMIKSLEAQ…KVRNKEKEER (246 aa). The interval 264-284 is disordered; sequence DKNQPQPLTNQSEQPPATDGL. Over residues 267 to 278 the composition is skewed to polar residues; sequence QPQPLTNQSEQP. At Arg-502 the chain carries Omega-N-methylarginine.

It belongs to the PLEKHD1 family.

The polypeptide is Pleckstrin homology domain-containing family D member 1 (Plekhd1) (Rattus norvegicus (Rat)).